We begin with the raw amino-acid sequence, 85 residues long: HPr-like protein Crh (85 aa).

One can recognise an HPr domain in the interval 1–85; it reads MVQQKVEVRL…KLAAYVQEEV (85 aa). Ser-46 carries the post-translational modification Phosphoserine; by HPrK/P.

Belongs to the HPr family. Mixture of monomers and homodimers. Interacts with CcpA as a monomer.

Along with seryl-phosphorylated HPr, phosphorylated Crh is implicated in carbon catabolite repression (CCR) of levanase, inositol dehydrogenase, and beta-xylosidase. Exerts its effect on CCR by interacting with CcpA. The sequence is that of HPr-like protein Crh (crh) from Bacillus subtilis (strain 168).